The primary structure comprises 602 residues: Leucine-rich repeat-containing protein 40 (602 aa).

Residues 1–20 (MSRLKRIAGQDPRAGFKAAG) are disordered. S71 is modified (phosphoserine). LRR repeat units follow at residues 83 to 104 (DLTK…LRLL), 106 to 127 (ALTV…MREL), 129 to 150 (NLQK…ITNL), 152 to 173 (NLKC…FEQL), 175 to 196 (NLED…FSSL), 198 to 219 (SLVR…INRM), 221 to 242 (RLKH…LAGM), 244 to 265 (SLEL…PSCS), 266 to 286 (LLKE…EHLK), 290 to 311 (SILV…IILL), 313 to 335 (SLER…GNLH), 336 to 356 (LKFL…IINK), 400 to 421 (TLKI…VFNA), 426 to 447 (IITS…MVEL), 450 to 471 (MVSD…LCML), 473 to 494 (KLTF…MESL), 496 to 517 (RLQT…LYRI), 519 to 540 (TLET…KMKM), 543 to 564 (NLTT…LGNC), and 566 to 586 (NLRT…AILI).

This Macaca fascicularis (Crab-eating macaque) protein is Leucine-rich repeat-containing protein 40 (LRRC40).